The chain runs to 536 residues: Zinc finger protein 394 (536 aa).

The segment at 18-45 (AVKVEEDSPGSQEPSGSGDWQNPETSRK) is disordered. A Glycyl lysine isopeptide (Lys-Gly) (interchain with G-Cter in SUMO2) cross-link involves residue Lys-20. Positions 26-41 (PGSQEPSGSGDWQNPE) are enriched in polar residues. In terms of domain architecture, SCAN box spans 44 to 126 (RKQFRQLRYQ…ALARTLQRAL (83 aa)). Positions 135 to 196 (ATFKDVAESL…KQEMSKEAES (62 aa)) constitute a KRAB domain. Residues Lys-207 and Lys-260 each participate in a glycyl lysine isopeptide (Lys-Gly) (interchain with G-Cter in SUMO2) cross-link. 3 C2H2-type zinc fingers span residues 328-350 (YKCDNCEKRFRQRSDLFKHQRTH), 356-378 (YQCQECGKSFSQSAALVKHQRTH), and 384-406 (YACPECGECFRQSSHLSRHQRTH). Residues 412–433 (CKCEECGEIFHISSLFKHQRLH) form a C2H2-type 4; atypical zinc finger. Lys-413 is covalently cross-linked (Glycyl lysine isopeptide (Lys-Gly) (interchain with G-Cter in SUMO2)). 3 consecutive C2H2-type zinc fingers follow at residues 439–461 (HKCEVCEKSFKQRSDLFKHQRIH), 467–489 (YMCFVCERRFSQSATLIKHQRTH), and 495–517 (YKCFQCGERFRQSTHLVRHQRIH).

Belongs to the krueppel C2H2-type zinc-finger protein family.

Its subcellular location is the nucleus. Its function is as follows. May be involved in transcriptional regulation. This Rattus norvegicus (Rat) protein is Zinc finger protein 394 (Znf394).